Here is an 834-residue protein sequence, read N- to C-terminus: uncharacterized protein (834 aa).

Disordered regions lie at residues 1–38 (MGSL…KAQP), 166–280 (DLSS…TPQE), and 767–787 (ISRV…NFHP). Composition is skewed to low complexity over residues 7 to 18 (SSKNNSSLGSIS) and 166 to 252 (DLSS…SSSS).

It belongs to the IIV-6 268L family.

This is an uncharacterized protein from Invertebrate iridescent virus 3 (IIV-3).